We begin with the raw amino-acid sequence, 635 residues long: MSDPNVTATIMNAQGECSSGSLESRPGILGWLDANFEKPFLVAGMLAIIFIITFQTLYRYIGVYLHEGAAAAVWTEEMARFIFIWISYLAVPVAIKNRSSIRVDIIFDRLPVRFQNISWIIVDVCFLTLAATVLWQSLDLIKMQLTYPQTSPALQLPYYIPYLVLPVSFGLMAVRLLQDLAGQVRICGAADTVIGLILCAVLAAPLFIADYIDPLPVLFGYFALFLVVGVPIAIGLGLAALATIVAAGSLPIDYVAQIAFTSIDSFPIMAIPFFIAAGVFMGAGGLSRRLLNLADEMLGALPGGMALATIGTCMFFAAISGSGPATVAAIGSLTIPAMVERGYCKYFSAAIVAAAGAIGVMIPPSNPFVVYGVSAQASIGKLFMGGIVPGLLTGLALMAYSYWYSKKRGWKGEVRDRNLKTFMHAVWEAKWALMVPVIVLGGIYGGIMTPTEAAALAAFYGLIIGCFVHRELSCGSFYDCVVEAAGTSAMVIVLMSMATIFGNIMTIEEVPTTIAQAMLGLTTDKIAILLMINVLLLIIGTFMEALAAIVILTPILLPIVLKVGVDPVHFGIIMVVNLAIGFVTPPVGVNLFVASGVANAKIEQLSKVVLPLIALMLAVLLITTYVPAIPMFFAG.

Helical transmembrane passes span 38-58, 75-95, 117-137, 154-174, 192-212, 217-237, 266-286, 299-319, 350-370, 379-399, 431-451, 453-473, 481-501, 526-546, 572-592, and 609-629; these read KPFLVAGMLAIIFIITFQTLY, TEEMARFIFIWISYLAVPVAI, ISWIIVDVCFLTLAATVLWQS, LQLPYYIPYLVLPVSFGLMAV, TVIGLILCAVLAAPLFIADYI, VLFGYFALFLVVGVPIAIGLG, FPIMAIPFFIAAGVFMGAGGL, GALPGGMALATIGTCMFFAAI, AIVAAAGAIGVMIPPSNPFVV, IGKLFMGGIVPGLLTGLALMA, WALMVPVIVLGGIYGGIMTPT, AAALAAFYGLIIGCFVHRELS, VVEAAGTSAMVIVLMSMATIF, IAILLMINVLLLIIGTFMEAL, IIMVVNLAIGFVTPPVGVNLF, and VLPLIALMLAVLLITTYVPAI.

It in the N-terminal section; belongs to the TRAP transporter small permease family. In the C-terminal section; belongs to the TRAP transporter large permease family. In terms of assembly, the complex comprises the periplasmic solute receptor protein DctP, and the fused transmembrane protein DctMQ.

The protein resides in the cell inner membrane. It participates in organosulfur degradation; alkanesulfonate degradation. Its function is as follows. Part of the tripartite ATP-independent periplasmic (TRAP) transport system DctPQM involved in the uptake of isethionate (2-hydroxyethanesulfonate), which is then catabolized by enzymes encoded by adjacent genes in the locus. Thereby is involved in an anaerobic respiration pathway that converts the sulfonate isethionate to ammonia, acetate and sulfide. The protein is Isethionate TRAP transporter permease protein DctMQ of Oleidesulfovibrio alaskensis (strain ATCC BAA-1058 / DSM 17464 / G20) (Desulfovibrio alaskensis).